Reading from the N-terminus, the 230-residue chain is MTTLTARPEAITFDPQQTALIVVDMQNAYATPGGYLDLAGFDVSTTRPVIANIQTAVTAARAAGMLIIWFQNGWDEQYVEAGGPGSPNYHKSNALKTMRNQPLLQGKLLTKGSWDYQLVDELMPQPGDIVLPKPRYSGFFNTPLDSILRSRGIRHLVFTGIATNVCVESTLRDGFFLEYFGVVLEDATHQAGPEFAQKAALFNIETFFGWVSDVETFCDALSSTSFARIA.

The active-site Proton acceptor is the aspartate 24. Residue lysine 133 is part of the active site. The active-site Nucleophile is the cysteine 166.

Belongs to the isochorismatase family. RutB subfamily.

It carries out the reaction (Z)-3-ureidoacrylate + H2O + H(+) = (Z)-3-aminoacrylate + NH4(+) + CO2. The enzyme catalyses (Z)-3-ureidoacrylate + H2O = (Z)-3-aminoacrylate + carbamate + H(+). The catalysed reaction is (Z)-2-methylureidoacrylate + H2O + H(+) = (Z)-2-methylaminoacrylate + NH4(+) + CO2. Hydrolyzes ureidoacrylate to form aminoacrylate and carbamate. The carbamate hydrolyzes spontaneously, thereby releasing one of the nitrogen atoms of the pyrimidine ring as ammonia and one of its carbon atoms as CO2. The polypeptide is Ureidoacrylate amidohydrolase RutB (Escherichia coli O127:H6 (strain E2348/69 / EPEC)).